The chain runs to 328 residues: Eukaryotic translation initiation factor 3 subunit I (328 aa).

WD repeat units follow at residues 8–49 (GHER…GTYR), 50–89 (GHNG…ELFT), 146–185 (DGKK…LLKQ), 191–230 (GHKK…LLKT), and 288–327 (GHFG…FNIK).

It belongs to the eIF-3 subunit I family. Component of the eukaryotic translation initiation factor 3 (eIF-3) complex.

It localises to the cytoplasm. Functionally, component of the eukaryotic translation initiation factor 3 (eIF-3) complex, which is involved in protein synthesis of a specialized repertoire of mRNAs and, together with other initiation factors, stimulates binding of mRNA and methionyl-tRNAi to the 40S ribosome. The eIF-3 complex specifically targets and initiates translation of a subset of mRNAs involved in cell proliferation. In Arabidopsis thaliana (Mouse-ear cress), this protein is Eukaryotic translation initiation factor 3 subunit I (TIF3I1).